A 647-amino-acid polypeptide reads, in one-letter code: Type II methyltransferase M.FokI (647 aa).

2 consecutive short sequence motifs (adenine-specific methylase) follow at residues 218-221 (DPPY) and 548-551 (DPPY).

This sequence belongs to the N(4)/N(6)-methyltransferase family. In terms of assembly, monomer.

It catalyses the reaction a 2'-deoxyadenosine in DNA + S-adenosyl-L-methionine = an N(6)-methyl-2'-deoxyadenosine in DNA + S-adenosyl-L-homocysteine + H(+). In terms of biological role, an alpha subtype methylase that recognizes the asymmetric double-stranded sequence 5'-GGATG-3', methylates A-3 of both strands, and protects the DNA from cleavage by the FokI endonuclease. In Planomicrobium okeanokoites (Planococcus okeanokoites), this protein is Type II methyltransferase M.FokI.